The chain runs to 463 residues: Ribosomal protein uS12 methylthiotransferase RimO (463 aa).

Positions 1–26 (MPAMSQNPPLLRPDLAPAPIFDTSRR) are disordered. Low complexity predominate over residues 8–19 (PPLLRPDLAPAP). The 111-residue stretch at 30–140 (PTIGMVSLGC…VLDAVHHAVP (111 aa)) folds into the MTTase N-terminal domain. 6 residues coordinate [4Fe-4S] cluster: cysteine 39, cysteine 75, cysteine 104, cysteine 171, cysteine 175, and cysteine 178. Positions 157 to 395 (LTPRHYSYLK…MQKAQAISEA (239 aa)) constitute a Radical SAM core domain. The TRAM domain occupies 398 to 463 (AAKVGHRIEV…AGEYDLWGRL (66 aa)).

The protein belongs to the methylthiotransferase family. RimO subfamily. The cofactor is [4Fe-4S] cluster.

The protein resides in the cytoplasm. The enzyme catalyses L-aspartate(89)-[ribosomal protein uS12]-hydrogen + (sulfur carrier)-SH + AH2 + 2 S-adenosyl-L-methionine = 3-methylsulfanyl-L-aspartate(89)-[ribosomal protein uS12]-hydrogen + (sulfur carrier)-H + 5'-deoxyadenosine + L-methionine + A + S-adenosyl-L-homocysteine + 2 H(+). Its function is as follows. Catalyzes the methylthiolation of an aspartic acid residue of ribosomal protein uS12. In Paracoccus denitrificans (strain Pd 1222), this protein is Ribosomal protein uS12 methylthiotransferase RimO.